The sequence spans 348 residues: Dihydroorotase (348 aa).

Residues His-14 and His-16 each contribute to the Zn(2+) site. Substrate is bound by residues 16-18 (HLR) and Asn-42. Zn(2+) contacts are provided by Lys-100, His-137, and His-175. An N6-carboxylysine modification is found at Lys-100. Position 137 (His-137) interacts with substrate. Residue Leu-220 coordinates substrate. Asp-248 serves as a coordination point for Zn(2+). Residue Asp-248 is part of the active site. Substrate contacts are provided by His-252 and Ala-264.

The protein belongs to the metallo-dependent hydrolases superfamily. DHOase family. Class II DHOase subfamily. Homodimer. Requires Zn(2+) as cofactor.

The enzyme catalyses (S)-dihydroorotate + H2O = N-carbamoyl-L-aspartate + H(+). Its pathway is pyrimidine metabolism; UMP biosynthesis via de novo pathway; (S)-dihydroorotate from bicarbonate: step 3/3. In terms of biological role, catalyzes the reversible cyclization of carbamoyl aspartate to dihydroorotate. The chain is Dihydroorotase from Ectopseudomonas mendocina (strain ymp) (Pseudomonas mendocina).